The sequence spans 402 residues: 8-amino-7-oxononanoate synthase (402 aa).

Arg26 contributes to the substrate binding site. 114–115 (GY) contacts pyridoxal 5'-phosphate. His139 is a binding site for substrate. Pyridoxal 5'-phosphate is bound by residues Ser182, His210, and Thr239. At Lys242 the chain carries N6-(pyridoxal phosphate)lysine. Substrate is bound at residue Thr359.

It belongs to the class-II pyridoxal-phosphate-dependent aminotransferase family. BioF subfamily. In terms of assembly, homodimer. Requires pyridoxal 5'-phosphate as cofactor.

It catalyses the reaction 6-carboxyhexanoyl-[ACP] + L-alanine + H(+) = (8S)-8-amino-7-oxononanoate + holo-[ACP] + CO2. Its pathway is cofactor biosynthesis; biotin biosynthesis. In terms of biological role, catalyzes the decarboxylative condensation of pimeloyl-[acyl-carrier protein] and L-alanine to produce 8-amino-7-oxononanoate (AON), [acyl-carrier protein], and carbon dioxide. The protein is 8-amino-7-oxononanoate synthase of Halorhodospira halophila (strain DSM 244 / SL1) (Ectothiorhodospira halophila (strain DSM 244 / SL1)).